The following is a 153-amino-acid chain: Pheromone-binding protein Gp-9 (153 aa).

The first 19 residues, 1-19 (MKTFVLHIFIFALVAFASA), serve as a signal peptide directing secretion. Intrachain disulfides connect C37–C77, C73–C129, and C118–C138.

Belongs to the PBP/GOBP family. As to quaternary structure, homodimer.

The protein resides in the secreted. Functionally, colony queen number, a major feature of social organization, is associated with worker genotype for Gp-9. Colonies are headed by either a single reproductive queen (monogyne form) or multiple queens (polygyne form). Differences in worker Gp-9 genotypes between social forms may cause differences in workers' abilities to recognize queens and regulate their numbers. The sequence is that of Pheromone-binding protein Gp-9 from Solenopsis interrupta (Fire ant).